Reading from the N-terminus, the 464-residue chain is Asparagine--tRNA ligase (464 aa).

This sequence belongs to the class-II aminoacyl-tRNA synthetase family. In terms of assembly, homodimer.

It localises to the cytoplasm. It catalyses the reaction tRNA(Asn) + L-asparagine + ATP = L-asparaginyl-tRNA(Asn) + AMP + diphosphate + H(+). The sequence is that of Asparagine--tRNA ligase from Clostridium botulinum (strain Alaska E43 / Type E3).